Consider the following 34-residue polypeptide: Photosystem II reaction center protein T (34 aa).

A helical membrane pass occupies residues 3-23; it reads ALVYTFLLVSTLGIIFFAIFF.

It belongs to the PsbT family. In terms of assembly, PSII is composed of 1 copy each of membrane proteins PsbA, PsbB, PsbC, PsbD, PsbE, PsbF, PsbH, PsbI, PsbJ, PsbK, PsbL, PsbM, PsbT, PsbY, PsbZ, Psb30/Ycf12, at least 3 peripheral proteins of the oxygen-evolving complex and a large number of cofactors. It forms dimeric complexes.

The protein localises to the plastid. It is found in the chloroplast thylakoid membrane. Its function is as follows. Found at the monomer-monomer interface of the photosystem II (PS II) dimer, plays a role in assembly and dimerization of PSII. PSII is a light-driven water plastoquinone oxidoreductase, using light energy to abstract electrons from H(2)O, generating a proton gradient subsequently used for ATP formation. The polypeptide is Photosystem II reaction center protein T (Solanum lycopersicum (Tomato)).